Here is an 88-residue protein sequence, read N- to C-terminus: ATP synthase subunit c 1 (88 aa).

The next 2 membrane-spanning stretches (helical) occupy residues 4-24 (FTWVIITAGFGMAFGSLGTAI) and 53-73 (IGLAMVESLAIYVFVVSMIIL).

This sequence belongs to the ATPase C chain family. In terms of assembly, F-type ATPases have 2 components, F(1) - the catalytic core - and F(0) - the membrane proton channel. F(1) has five subunits: alpha(3), beta(3), gamma(1), delta(1), epsilon(1). F(0) has three main subunits: a(1), b(2) and c(10-14). The alpha and beta chains form an alternating ring which encloses part of the gamma chain. F(1) is attached to F(0) by a central stalk formed by the gamma and epsilon chains, while a peripheral stalk is formed by the delta and b chains.

It localises to the cell inner membrane. Functionally, f(1)F(0) ATP synthase produces ATP from ADP in the presence of a proton or sodium gradient. F-type ATPases consist of two structural domains, F(1) containing the extramembraneous catalytic core and F(0) containing the membrane proton channel, linked together by a central stalk and a peripheral stalk. During catalysis, ATP synthesis in the catalytic domain of F(1) is coupled via a rotary mechanism of the central stalk subunits to proton translocation. Its function is as follows. Key component of the F(0) channel; it plays a direct role in translocation across the membrane. A homomeric c-ring of between 10-14 subunits forms the central stalk rotor element with the F(1) delta and epsilon subunits. The polypeptide is ATP synthase subunit c 1 (Syntrophotalea carbinolica (strain DSM 2380 / NBRC 103641 / GraBd1) (Pelobacter carbinolicus)).